The chain runs to 176 residues: NAD(P)H-quinone oxidoreductase subunit J (176 aa).

Residues 1-10 (MSETPTSPNQ) show a composition bias toward polar residues. Positions 1–22 (MSETPTSPNQDLPEAPQAGPLS) are disordered.

The protein belongs to the complex I 30 kDa subunit family. In terms of assembly, NDH-1 can be composed of about 15 different subunits; different subcomplexes with different compositions have been identified which probably have different functions.

The protein resides in the cellular thylakoid membrane. The enzyme catalyses a plastoquinone + NADH + (n+1) H(+)(in) = a plastoquinol + NAD(+) + n H(+)(out). It catalyses the reaction a plastoquinone + NADPH + (n+1) H(+)(in) = a plastoquinol + NADP(+) + n H(+)(out). Its function is as follows. NDH-1 shuttles electrons from an unknown electron donor, via FMN and iron-sulfur (Fe-S) centers, to quinones in the respiratory and/or the photosynthetic chain. The immediate electron acceptor for the enzyme in this species is believed to be plastoquinone. Couples the redox reaction to proton translocation, and thus conserves the redox energy in a proton gradient. Cyanobacterial NDH-1 also plays a role in inorganic carbon-concentration. The chain is NAD(P)H-quinone oxidoreductase subunit J from Synechococcus sp. (strain RCC307).